We begin with the raw amino-acid sequence, 309 residues long: Porphobilinogen deaminase (309 aa).

C241 is subject to S-(dipyrrolylmethanemethyl)cysteine.

Belongs to the HMBS family. As to quaternary structure, monomer. Requires dipyrromethane as cofactor.

It carries out the reaction 4 porphobilinogen + H2O = hydroxymethylbilane + 4 NH4(+). It participates in porphyrin-containing compound metabolism; protoporphyrin-IX biosynthesis; coproporphyrinogen-III from 5-aminolevulinate: step 2/4. Functionally, tetrapolymerization of the monopyrrole PBG into the hydroxymethylbilane pre-uroporphyrinogen in several discrete steps. The protein is Porphobilinogen deaminase of Bacillus cereus (strain B4264).